The following is a 244-amino-acid chain: Serine-rich single-pass membrane protein 1 (244 aa).

A helical membrane pass occupies residues 35–55; sequence CGTIGSFLLWYFVIVFVLMFF. Disordered stretches follow at residues 65 to 114, 126 to 191, and 210 to 244; these read DKKD…PVTN, QRRA…LGSY, and LAHH…FSKF. The segment covering 80–94 has biased composition (basic and acidic residues); sequence ASKETSCKRQSKDSA. Polar residues-rich tracts occupy residues 96–114 and 132–142; these read DPSQ…PVTN and QSQFNEVNQNQ. Residues 161–176 show a composition bias toward basic and acidic residues; sequence SWKESESEHHPSPDSI.

It localises to the membrane. The chain is Serine-rich single-pass membrane protein 1 (SSMEM1) from Homo sapiens (Human).